The chain runs to 92 residues: MNKTELINAVAEASELSKKDATKAVDSVFDTILDALKNGDKIQLIGFGNFEVRERSARKGRNPQTGEEIEIPASKVPAFKPGKALKDAVAGK.

Residue T4 is modified to Phosphothreonine.

The protein belongs to the bacterial histone-like protein family. In terms of assembly, homodimer. As to quaternary structure, (Microbial infection) Interacts with Bacillus phage SP01 Gp46; the interaction replaces dsDNA from the hbs-DNA complex.

Its subcellular location is the cytoplasm. It is found in the nucleoid. Functionally, histone-like DNA-binding protein which introduces negative supercoils in relaxed plasmid DNA in the presence of topoisomerase I. There are at least 20,000 monomers/cell. Capable of wrapping DNA to stabilize it, and thus to prevent its denaturation under extreme environmental conditions. Binds evenly across chromosome, does not display a preference for AT content. Binds ss- and dsDNA in a sequence non-specific manner; 8 nucleotides are sufficient to bind protein. The protein is DNA-binding protein HU 1 of Bacillus subtilis (strain 168).